We begin with the raw amino-acid sequence, 801 residues long: Disks large homolog 4 (801 aa).

In terms of domain architecture, L27 spans 4–60 (KREDTERALQAMEACQSAGDEGFRTRAERLLTIFQSDLFQALLDIQEFYELTVFENQ). PDZ domains are found at residues 153 to 240 (EITL…LRHK) and 248 to 335 (ELKL…AKTL). The segment at 339–373 (HHQDAYNPPDITSSYSPHMDMSDYPQALSPSSPRR) is disordered. A PDZ 3 domain is found at 393 to 474 (RVVIHRGSTG…TVTIITQYRP (82 aa)). The region spanning 507-577 (KRSFFIRALF…PSKRRVERKE (71 aa)) is the SH3 domain. In terms of domain architecture, Guanylate kinase-like spans 610 to 786 (ARPVIILGPS…IYHHVKSVIE (177 aa)).

Belongs to the MAGUK family. Ubiquitinated by MDM2 in response to NMDA receptor activation, leading to proteasome-mediated degradation of DLG4 which is required for AMPA receptor endocytosis. In terms of processing, palmitoylated. Palmitoylation is required for targeting to postsynaptic density, plasma membrane and synapses.

Its subcellular location is the cell membrane. It is found in the postsynaptic density. The protein localises to the synapse. Postsynaptic scaffolding protein that plays a critical role in synaptogenesis and synaptic plasticity by providing a platform for the postsynaptic clustering of crucial synaptic proteins. The polypeptide is Disks large homolog 4 (dlg4) (Danio rerio (Zebrafish)).